The sequence spans 186 residues: tRNA (cytidine(56)-2'-O)-methyltransferase (186 aa).

Residues Leu-84 and 110–114 (GAEKV) contribute to the S-adenosyl-L-methionine site.

It belongs to the aTrm56 family. In terms of assembly, homodimer.

Its subcellular location is the cytoplasm. It carries out the reaction cytidine(56) in tRNA + S-adenosyl-L-methionine = 2'-O-methylcytidine(56) in tRNA + S-adenosyl-L-homocysteine + H(+). Specifically catalyzes the AdoMet-dependent 2'-O-ribose methylation of cytidine at position 56 in tRNAs. The polypeptide is tRNA (cytidine(56)-2'-O)-methyltransferase (Staphylothermus marinus (strain ATCC 43588 / DSM 3639 / JCM 9404 / F1)).